Consider the following 211-residue polypeptide: Redox-sensing transcriptional repressor Rex (211 aa).

The segment at residues 17-56 is a DNA-binding region (H-T-H motif); sequence LYYRFVSSLKSKGIDRVNSKAISDALQIDSATIRRDFSYF. 91 to 96 is an NAD(+) binding site; it reads GVGNLG.

The protein belongs to the transcriptional regulatory Rex family. Homodimer.

The protein localises to the cytoplasm. In terms of biological role, modulates transcription in response to changes in cellular NADH/NAD(+) redox state. This chain is Redox-sensing transcriptional repressor Rex, found in Staphylococcus aureus (strain Mu3 / ATCC 700698).